Consider the following 682-residue polypeptide: Potassium-transporting ATPase ATP-binding subunit (682 aa).

A run of 4 helical transmembrane segments spans residues 34–54 (PVMFVVWAGSVLTTLLTLAMV), 58–78 (IAGSALFTGVISLWLWFTVLF), 219–239 (IALTILLIALTIVFLLATATL), and 254–274 (VLVALLVCLIPTTIGGLLSAI). The 4-aspartylphosphate intermediate role is filled by aspartate 307. Residues aspartate 344, glutamate 348, 377–384 (FTAQSRMS), and lysine 395 each bind ATP. Residues aspartate 518 and aspartate 522 each contribute to the Mg(2+) site. Transmembrane regions (helical) follow at residues 588–608 (FAIIPAAFAATYPQLNALNVM), 616–636 (AILSAVIFNALIIIFLIPLAL), and 662–682 (LVVPFIGIKVIDVLLTLLGLA).

The protein belongs to the cation transport ATPase (P-type) (TC 3.A.3) family. Type IA subfamily. In terms of assembly, the system is composed of three essential subunits: KdpA, KdpB and KdpC.

The protein localises to the cell inner membrane. It carries out the reaction K(+)(out) + ATP + H2O = K(+)(in) + ADP + phosphate + H(+). In terms of biological role, part of the high-affinity ATP-driven potassium transport (or Kdp) system, which catalyzes the hydrolysis of ATP coupled with the electrogenic transport of potassium into the cytoplasm. This subunit is responsible for energy coupling to the transport system and for the release of the potassium ions to the cytoplasm. The chain is Potassium-transporting ATPase ATP-binding subunit from Salmonella paratyphi B (strain ATCC BAA-1250 / SPB7).